A 499-amino-acid polypeptide reads, in one-letter code: Aldehyde dehydrogenase 1 (499 aa).

NAD(+) is bound by residues 164–166 (IPW), 164–167 (IPWN), 190–193 (KPAE), 223–224 (GS), 243–244 (GS), 243–248 (GSTKVG), and 266–268 (ELG). E266 acts as the Proton acceptor in catalysis. C300 serves as the catalytic Nucleophile. Residues 346 to 350 (QQYEK) and 397 to 399 (EIF) each bind NAD(+).

This sequence belongs to the aldehyde dehydrogenase family. As to quaternary structure, homotetramer. As to expression, expressed in flowers and disk florets.

It carries out the reaction an aldehyde + NAD(+) + H2O = a carboxylate + NADH + 2 H(+). The enzyme catalyses an aldehyde + NADP(+) + H2O = a carboxylate + NADPH + 2 H(+). The catalysed reaction is octanal + NADP(+) + H2O = octanoate + NADPH + 2 H(+). It catalyses the reaction (1R,3R)-chrysanthemal + NAD(+) + H2O = (1R,3R)-chrysanthemate + NADH + 2 H(+). It carries out the reaction (1R,3R)-chrysanthemal + NADP(+) + H2O = (1R,3R)-chrysanthemate + NADPH + 2 H(+). The enzyme catalyses (E)-hept-2-enal + NADP(+) + H2O = (E)-hept-2-enoate + NADPH + 2 H(+). The catalysed reaction is dodecanal + NADP(+) + H2O = dodecanoate + NADPH + 2 H(+). It catalyses the reaction citral + NADP(+) + H2O = 3,7-dimethylocta-2,6-dienoate + NADPH + 2 H(+). It carries out the reaction perillyl aldehyde + NADP(+) + H2O = perillate + NADPH + 2 H(+). The enzyme catalyses (2E,6E)-farnesal + NADP(+) + H2O = (2E,6E)-farnesoate + NADPH + 2 H(+). The catalysed reaction is (S)-(-)-citronellal + NADP(+) + H2O = (S)-(-)-citronellate + NADPH + 2 H(+). Its pathway is isoprenoid biosynthesis. In terms of biological role, component of the monoterpenoid pyrethrins biosynthesis; pyrethrins are widely used plant-derived pesticide. Mediates the conversion of trans-chrysanthemal into trans-chrysanthemic acid. Can also use octanal, hept-2-enal, dodecanal, citral, farnesal, citronellal and perillyl aldehyde as substrates. In Tanacetum cinerariifolium (Dalmatian daisy), this protein is Aldehyde dehydrogenase 1.